Here is a 280-residue protein sequence, read N- to C-terminus: Transcription factor HES-1 (280 aa).

Residues 1–44 (MPADIMEKNSSSPVAATPASVNTTPDKPKTASEHRKSSKPIMEK) are disordered. The span at 10–21 (SSSPVAATPASV) shows a compositional bias: low complexity. A compositionally biased stretch (basic and acidic residues) spans 26–35 (DKPKTASEHR). The bHLH domain occupies 34 to 91 (HRKSSKPIMEKRRRARINESLSQLKTLILDALKKDSSRHSKLEKADILEMTVKHLRNL). In terms of domain architecture, Orange spans 110 to 143 (YRAGFSECMNEVTRFLSTCEGVNTEVRTRLLGHL). 2 disordered regions span residues 157–200 (GQPH…PPGG) and 254–280 (TSVG…PWRN). 2 stretches are compositionally biased toward pro residues: residues 164-174 (QAPPPPPPGPG) and 181-200 (FAPP…PPGG). Residues 254–271 (TSVGPNAVSPSSGPSLTA) show a composition bias toward polar residues. The WRPW motif motif lies at 275-278 (WRPW).

Transcription repression requires formation of a complex with a corepressor protein of the Groucho/TLE family. Interacts with SIRT1. Interacts (via WPRW motif) with TLE1, and more weakly with TLE2. Interacts with HES6. Interacts with an FA complex, composed of FANCA, FANCF, FANCG and FANCL, but not of FANCC, nor FANCE.

Its subcellular location is the nucleus. Functionally, transcriptional repressor of genes that require a bHLH protein for their transcription. May act as a negative regulator of myogenesis by inhibiting the functions of MYOD1 and ASH1. Binds DNA on N-box motifs: 5'-CACNAG-3' with high affinity and on E-box motifs: 5'-CANNTG-3' with low affinity. May play a role in a functional FA core complex response to DNA cross-link damage, being required for the stability and nuclear localization of FA core complex proteins, as well as for FANCD2 monoubiquitination in response to DNA damage. In Bos taurus (Bovine), this protein is Transcription factor HES-1 (HES1).